Consider the following 134-residue polypeptide: ATP synthase epsilon chain (134 aa).

It belongs to the ATPase epsilon chain family. In terms of assembly, F-type ATPases have 2 components, CF(1) - the catalytic core - and CF(0) - the membrane proton channel. CF(1) has five subunits: alpha(3), beta(3), gamma(1), delta(1), epsilon(1). CF(0) has three main subunits: a, b and c.

The protein localises to the cell inner membrane. In terms of biological role, produces ATP from ADP in the presence of a proton gradient across the membrane. This Sinorhizobium medicae (strain WSM419) (Ensifer medicae) protein is ATP synthase epsilon chain.